A 222-amino-acid chain; its full sequence is Probable fimbrial chaperone EcpB (222 aa).

The first 20 residues, 1 to 20, serve as a signal peptide directing secretion; the sequence is MKKHLLPLALLFSGISPAQA.

Belongs to the EcpB/EcpE family.

Part of the ecpRABCDE operon, which encodes the E.coli common pilus (ECP). ECP is found in both commensal and pathogenic strains and plays a dual role in early-stage biofilm development and host cell recognition. The protein is Probable fimbrial chaperone EcpB (ecpB) of Escherichia coli (strain K12).